A 103-amino-acid polypeptide reads, in one-letter code: Small ribosomal subunit protein uS10 (103 aa).

Belongs to the universal ribosomal protein uS10 family. In terms of assembly, part of the 30S ribosomal subunit.

In terms of biological role, involved in the binding of tRNA to the ribosomes. The sequence is that of Small ribosomal subunit protein uS10 from Borreliella burgdorferi (strain ATCC 35210 / DSM 4680 / CIP 102532 / B31) (Borrelia burgdorferi).